A 379-amino-acid polypeptide reads, in one-letter code: Guanine nucleotide-binding protein G(s) subunit alpha (379 aa).

Residues 1 to 25 (MGCLGNSKTEDQRNEEKVQRETNKK) form a disordered region. Gly2 is lipidated: N-palmitoyl glycine. The S-palmitoyl cysteine moiety is linked to residue Cys3. Basic and acidic residues predominate over residues 8–25 (KTEDQRNEEKVQRETNKK). The G-alpha domain occupies 39-379 (ATHRLLLLGA…RMHLRQYELL (341 aa)). Residues 42 to 55 (RLLLLGAGESGKSS) are G1 motif. GTP contacts are provided by residues 47–55 (GAGESGKSS), 182–189 (LLRCRVLT), 208–212 (DVGGQ), 277–280 (NKQD), and Ala351. Residues Ser54 and Thr189 each contribute to the Mg(2+) site. The interval 181 to 189 (DLLRCRVLT) is G2 motif. The tract at residues 204–213 (FHMFDVGGQR) is G3 motif. The G4 motif stretch occupies residues 273–280 (ILFLNKQD). Residues 349–354 (TCAVDT) form a G5 motif region.

Belongs to the G-alpha family. G(s) subfamily. As to quaternary structure, heterotrimeric G proteins are composed of 3 units; alpha, beta and gamma. The alpha chain contains the guanine nucleotide binding site.

The protein localises to the cell membrane. Guanine nucleotide-binding proteins (G proteins) function as transducers in numerous signaling pathways controlled by G protein-coupled receptors (GPCRs). Signaling involves the activation of adenylyl cyclases, resulting in increased levels of the signaling molecule cAMP. GNAS functions downstream of several GPCRs, including beta-adrenergic receptors. Stimulates the Ras signaling pathway. The polypeptide is Guanine nucleotide-binding protein G(s) subunit alpha (gnas) (Xenopus laevis (African clawed frog)).